We begin with the raw amino-acid sequence, 110 residues long: Nucleoid-associated protein NFA_2940 (110 aa).

This sequence belongs to the YbaB/EbfC family. Homodimer.

The protein localises to the cytoplasm. Its subcellular location is the nucleoid. In terms of biological role, binds to DNA and alters its conformation. May be involved in regulation of gene expression, nucleoid organization and DNA protection. The chain is Nucleoid-associated protein NFA_2940 from Nocardia farcinica (strain IFM 10152).